The following is a 224-amino-acid chain: Ribonuclease T (224 aa).

Residues 1-11 (MSEDLYEDDQD) show a composition bias toward acidic residues. The interval 1–20 (MSEDLYEDDQDSQVSSGSRH) is disordered. Residues 32 to 206 (VVVDVETGGF…YDTEKTAELF (175 aa)) enclose the Exonuclease domain. Aspartate 35, glutamate 37, histidine 193, and aspartate 198 together coordinate Mg(2+). The Proton donor/acceptor role is filled by histidine 193.

Belongs to the RNase T family. As to quaternary structure, homodimer. It depends on Mg(2+) as a cofactor.

Trims short 3' overhangs of a variety of RNA species, leaving a one or two nucleotide 3' overhang. Responsible for the end-turnover of tRNA: specifically removes the terminal AMP residue from uncharged tRNA (tRNA-C-C-A). Also appears to be involved in tRNA biosynthesis. The protein is Ribonuclease T of Pseudomonas entomophila (strain L48).